The sequence spans 145 residues: D-aminoacyl-tRNA deacylase (145 aa).

Positions 137–138 (GP) match the Gly-cisPro motif, important for rejection of L-amino acids motif.

The protein belongs to the DTD family. In terms of assembly, homodimer.

The protein resides in the cytoplasm. It carries out the reaction glycyl-tRNA(Ala) + H2O = tRNA(Ala) + glycine + H(+). The catalysed reaction is a D-aminoacyl-tRNA + H2O = a tRNA + a D-alpha-amino acid + H(+). In terms of biological role, an aminoacyl-tRNA editing enzyme that deacylates mischarged D-aminoacyl-tRNAs. Also deacylates mischarged glycyl-tRNA(Ala), protecting cells against glycine mischarging by AlaRS. Acts via tRNA-based rather than protein-based catalysis; rejects L-amino acids rather than detecting D-amino acids in the active site. By recycling D-aminoacyl-tRNA to D-amino acids and free tRNA molecules, this enzyme counteracts the toxicity associated with the formation of D-aminoacyl-tRNA entities in vivo and helps enforce protein L-homochirality. This is D-aminoacyl-tRNA deacylase from Legionella pneumophila (strain Lens).